The chain runs to 171 residues: Serine acetyltransferase (171 aa).

The protein belongs to the transferase hexapeptide repeat family.

It localises to the cytoplasm. The catalysed reaction is L-serine + acetyl-CoA = O-acetyl-L-serine + CoA. Its pathway is amino-acid biosynthesis; L-cysteine biosynthesis; L-cysteine from L-serine: step 1/2. This Helicobacter pylori (strain ATCC 700392 / 26695) (Campylobacter pylori) protein is Serine acetyltransferase (cysE).